Reading from the N-terminus, the 234-residue chain is Prolactin-6A1 (234 aa).

The N-terminal stretch at 1 to 33 (MVKSWLRMSKKMEAGTLLMLLMSNILLWENVAS) is a signal peptide. A glycan (N-linked (GlcNAc...) asparagine) is linked at asparagine 61. 2 cysteine pairs are disulfide-bonded: cysteine 93–cysteine 209 and cysteine 226–cysteine 234.

It belongs to the somatotropin/prolactin family.

It is found in the secreted. This chain is Prolactin-6A1 (Prl6a1), found in Rattus norvegicus (Rat).